The chain runs to 467 residues: Flagellar hook-associated protein 2 (467 aa).

The stretch at 411-439 (VNATLKSLTKQYLSVSNSIDETVARYKAQ) forms a coiled coil.

Belongs to the FliD family. As to quaternary structure, homopentamer.

It localises to the secreted. The protein resides in the bacterial flagellum. Functionally, required for the morphogenesis and for the elongation of the flagellar filament by facilitating polymerization of the flagellin monomers at the tip of growing filament. Forms a capping structure, which prevents flagellin subunits (transported through the central channel of the flagellum) from leaking out without polymerization at the distal end. This chain is Flagellar hook-associated protein 2 (fliD), found in Salmonella typhimurium (strain LT2 / SGSC1412 / ATCC 700720).